The sequence spans 321 residues: tRNA U34 carboxymethyltransferase (321 aa).

Residues K90, W104, K109, G129, 151–153 (DPT), 180–181 (IE), M195, Y199, and R314 each bind carboxy-S-adenosyl-L-methionine.

It belongs to the class I-like SAM-binding methyltransferase superfamily. CmoB family. In terms of assembly, homotetramer.

It carries out the reaction carboxy-S-adenosyl-L-methionine + 5-hydroxyuridine(34) in tRNA = 5-carboxymethoxyuridine(34) in tRNA + S-adenosyl-L-homocysteine + H(+). Catalyzes carboxymethyl transfer from carboxy-S-adenosyl-L-methionine (Cx-SAM) to 5-hydroxyuridine (ho5U) to form 5-carboxymethoxyuridine (cmo5U) at position 34 in tRNAs. The polypeptide is tRNA U34 carboxymethyltransferase (Haemophilus influenzae (strain PittGG)).